The primary structure comprises 614 residues: ATP-dependent zinc metalloprotease FtsH (614 aa).

Residues 1–5 lie on the Cytoplasmic side of the membrane; sequence MLPIR. A helical membrane pass occupies residues 6–26; the sequence is WFLALLAVFLAVAGLDLWFSQ. Topologically, residues 27–127 are periplasmic; that stretch reads TGARPSSATG…AVSARERTAS (101 aa). Residues 128–148 traverse the membrane as a helical segment; that stretch reads IVHAIVHPLGLITLIVGILFV. The Cytoplasmic portion of the chain corresponds to 149–614; sequence VQRYAGRFTA…AQHPPSALAG (466 aa). 214 to 221 lines the ATP pocket; the sequence is GPPGTGKT. His-436 lines the Zn(2+) pocket. Glu-437 is an active-site residue. Zn(2+) contacts are provided by His-440 and Asp-513.

In the central section; belongs to the AAA ATPase family. The protein in the C-terminal section; belongs to the peptidase M41 family. Homohexamer. It depends on Zn(2+) as a cofactor.

It is found in the cell inner membrane. Acts as a processive, ATP-dependent zinc metallopeptidase for both cytoplasmic and membrane proteins. Plays a role in the quality control of integral membrane proteins. The sequence is that of ATP-dependent zinc metalloprotease FtsH from Opitutus terrae (strain DSM 11246 / JCM 15787 / PB90-1).